The chain runs to 205 residues: ATP synthase subunit b (205 aa).

A helical transmembrane segment spans residues 45-65; it reads LGMTATAWVSLAMVIVILLLL.

The protein belongs to the ATPase B chain family. In terms of assembly, F-type ATPases have 2 components, F(1) - the catalytic core - and F(0) - the membrane proton channel. F(1) has five subunits: alpha(3), beta(3), gamma(1), delta(1), epsilon(1). F(0) has three main subunits: a(1), b(2) and c(10-14). The alpha and beta chains form an alternating ring which encloses part of the gamma chain. F(1) is attached to F(0) by a central stalk formed by the gamma and epsilon chains, while a peripheral stalk is formed by the delta and b chains.

The protein resides in the cell inner membrane. F(1)F(0) ATP synthase produces ATP from ADP in the presence of a proton or sodium gradient. F-type ATPases consist of two structural domains, F(1) containing the extramembraneous catalytic core and F(0) containing the membrane proton channel, linked together by a central stalk and a peripheral stalk. During catalysis, ATP synthesis in the catalytic domain of F(1) is coupled via a rotary mechanism of the central stalk subunits to proton translocation. Its function is as follows. Component of the F(0) channel, it forms part of the peripheral stalk, linking F(1) to F(0). The sequence is that of ATP synthase subunit b from Rhizorhabdus wittichii (strain DSM 6014 / CCUG 31198 / JCM 15750 / NBRC 105917 / EY 4224 / RW1) (Sphingomonas wittichii).